Reading from the N-terminus, the 548-residue chain is Spindle pole body-associated protein cut12 (548 aa).

An interaction with plo1 region spans residues 122-325; the sequence is FKSPLLQSTP…GQQSKYKGKE (204 aa). The interval 123 to 182 is disordered; the sequence is KSPLLQSTPKPNINNPDNENKSKHDEFDNRYNININESYKNETKSNQRLGEDVPSKKKYP. A compositionally biased stretch (polar residues) spans 126 to 139; the sequence is LLQSTPKPNINNPD. Composition is skewed to basic and acidic residues over residues 140-151 and 161-182; these read NENKSKHDEFDN and YKNETKSNQRLGEDVPSKKKYP. A coiled-coil region spans residues 261–312; it reads KQKFSMLDSAHSDLELELTSIRERLESLILEKQEEINFWKQRCRALETEKIH. The span at 344–356 shows a compositional bias: polar residues; the sequence is PITTKVVSRPSQS. Disordered stretches follow at residues 344–369 and 510–548; these read PITTKVVSRPSQSDVREPQEQVPSKN and SRVDYDLKSPNQRTANAKKRLEERRRRRKLKLQELQLNS. A coiled-coil region spans residues 522–548; the sequence is RTANAKKRLEERRRRRKLKLQELQLNS.

In terms of assembly, self-associates. Interacts with plo1.

The protein resides in the cytoplasm. Its subcellular location is the cytoskeleton. It is found in the microtubule organizing center. The protein localises to the spindle pole body. Its function is as follows. Required for bipolar spindle formation. May act as a regulator of the p34cdc2/cyclin B kinase. Required for full activation of the plo1 kinase. However, in cut12.1 cells at restrictive temperature the H1 kinase does rise concomitant with entry into mitosis, indicating that cut12 is not required for activation of p34cdc2/cyclin B. The cut12.s11 allele may promote cdc2-independent phosphorylation of SPB proteins thereby overcoming the requirement for cdc25 in cell cycle progression. In Schizosaccharomyces pombe (strain 972 / ATCC 24843) (Fission yeast), this protein is Spindle pole body-associated protein cut12 (cut12).